Here is a 445-residue protein sequence, read N- to C-terminus: Eukaryotic peptide chain release factor subunit 1 (445 aa).

The protein belongs to the eukaryotic release factor 1 family. In terms of assembly, heterodimer of two subunits, one of which binds GTP.

It is found in the cytoplasm. Its function is as follows. Directs the termination of nascent peptide synthesis (translation) in response to the termination codon UGA. In Stylonchia UAA and UAG codes for glutamine. The protein is Eukaryotic peptide chain release factor subunit 1 (ERF1) of Stylonychia mytilus (Ciliate).